Here is a 118-residue protein sequence, read N- to C-terminus: Small ribosomal subunit protein uS13 (118 aa).

The interval 94 to 118 (GLPVRGQRTKTNARTRKGPRKPIKK) is disordered.

The protein belongs to the universal ribosomal protein uS13 family. As to quaternary structure, part of the 30S ribosomal subunit. Forms a loose heterodimer with protein S19. Forms two bridges to the 50S subunit in the 70S ribosome.

Its function is as follows. Located at the top of the head of the 30S subunit, it contacts several helices of the 16S rRNA. In the 70S ribosome it contacts the 23S rRNA (bridge B1a) and protein L5 of the 50S subunit (bridge B1b), connecting the 2 subunits; these bridges are implicated in subunit movement. Contacts the tRNAs in the A and P-sites. The sequence is that of Small ribosomal subunit protein uS13 from Mannheimia succiniciproducens (strain KCTC 0769BP / MBEL55E).